Consider the following 681-residue polypeptide: Spermatogenesis-associated protein 21 (681 aa).

Residues 1-14 (MENRNTHTHPESKA) show a composition bias toward basic and acidic residues. Disordered regions lie at residues 1–284 (MENR…ANSR) and 298–336 (EEAT…VPTL). Polar residues-rich tracts occupy residues 83-94 (QEPSARPRTTQD) and 159-173 (PSNS…NSPS). The segment covering 251 to 261 (PEERDTEKKEL) has biased composition (basic and acidic residues). The span at 264–281 (GQKQRQQALSAAGTQGPA) shows a compositional bias: polar residues. The span at 319–335 (TVTSVSTSGPISSSVPT) shows a compositional bias: low complexity. In terms of domain architecture, EF-hand spans 464-499 (FTPAQVEEALMSADVNGDGHVDFKDFLAVMTDTKRF). Residues Asp477, Asn479, Asp481, His483, and Asp488 each coordinate Ca(2+). Positions 653 to 681 (LFFQPGQQGSREHSSDSRKWLSSMPARTH) are disordered. The segment covering 662–671 (SREHSSDSRK) has biased composition (basic and acidic residues).

In terms of biological role, involved in the differentiation of haploid spermatids. This is Spermatogenesis-associated protein 21 (Spata21) from Mus musculus (Mouse).